The primary structure comprises 294 residues: Formamidopyrimidine-DNA glycosylase (294 aa).

Pro2 serves as the catalytic Schiff-base intermediate with DNA. The active-site Proton donor is the Glu3. The active-site Proton donor; for beta-elimination activity is the Lys61. DNA contacts are provided by His104, Arg123, and Lys169. Residues 255 to 289 (AVYGRQDEPCRRCGAPIVREKFMNRSSYSCPRCQP) form an FPG-type zinc finger. Arg279 functions as the Proton donor; for delta-elimination activity in the catalytic mechanism.

The protein belongs to the FPG family. In terms of assembly, monomer. It depends on Zn(2+) as a cofactor.

It carries out the reaction Hydrolysis of DNA containing ring-opened 7-methylguanine residues, releasing 2,6-diamino-4-hydroxy-5-(N-methyl)formamidopyrimidine.. The catalysed reaction is 2'-deoxyribonucleotide-(2'-deoxyribose 5'-phosphate)-2'-deoxyribonucleotide-DNA = a 3'-end 2'-deoxyribonucleotide-(2,3-dehydro-2,3-deoxyribose 5'-phosphate)-DNA + a 5'-end 5'-phospho-2'-deoxyribonucleoside-DNA + H(+). Involved in base excision repair of DNA damaged by oxidation or by mutagenic agents. Acts as a DNA glycosylase that recognizes and removes damaged bases. Has a preference for oxidized purines, such as 7,8-dihydro-8-oxoguanine (8-oxoG). Has AP (apurinic/apyrimidinic) lyase activity and introduces nicks in the DNA strand. Cleaves the DNA backbone by beta-delta elimination to generate a single-strand break at the site of the removed base with both 3'- and 5'-phosphates. In Nocardia farcinica (strain IFM 10152), this protein is Formamidopyrimidine-DNA glycosylase.